The following is a 371-amino-acid chain: tRNA-specific 2-thiouridylase MnmA (371 aa).

ATP-binding positions include 13 to 20 (GMSGGVDS) and Met-39. The tract at residues 99–101 (NPD) is interaction with target base in tRNA. Cys-104 (nucleophile) is an active-site residue. Cys-104 and Cys-200 are disulfide-bonded. Gly-128 contacts ATP. The interaction with tRNA stretch occupies residues 150-152 (KDQ). Cys-200 acts as the Cysteine persulfide intermediate in catalysis. The tract at residues 309–310 (RY) is interaction with tRNA.

The protein belongs to the MnmA/TRMU family.

Its subcellular location is the cytoplasm. The enzyme catalyses S-sulfanyl-L-cysteinyl-[protein] + uridine(34) in tRNA + AH2 + ATP = 2-thiouridine(34) in tRNA + L-cysteinyl-[protein] + A + AMP + diphosphate + H(+). Functionally, catalyzes the 2-thiolation of uridine at the wobble position (U34) of tRNA, leading to the formation of s(2)U34. The sequence is that of tRNA-specific 2-thiouridylase MnmA from Bacillus subtilis (strain 168).